The chain runs to 67 residues: Beta-defensin 123 (67 aa).

A signal peptide spans 1-20; sequence MKLLLLTLTVLLLLSQLTPG. 3 disulfide bridges follow: cysteine 25–cysteine 52, cysteine 32–cysteine 46, and cysteine 36–cysteine 53.

This sequence belongs to the beta-defensin family.

The protein resides in the secreted. Has antibacterial activity. This is Beta-defensin 123 (DEFB123) from Gorilla gorilla gorilla (Western lowland gorilla).